The following is a 303-amino-acid chain: MATKAAFARMNGLGNQIIVADMRGRADSITSAAAIRLASDSETAFDQIMAIHDPRTPGTDYYIAIINCDGTQAQACGNGTRCVVQALAAETGRHAFTFETRAGILTATEHDDGLISVDMGTPRFDWQDIPLAQAVADTRKIELQVGPADAPVLHSPSIASMGNPHAVFWVDKDVWSYELDKFGPLLENHPIFPERANISIAHVTSSDTIDLRTWERGAGLTRACGSAACAAAVSAARTGRTGRKVTVNVPGGPLLIEWRDDDHVMMTGPAEWEFSGTFDPATGEWSRDTQGLQGSGNADRGTA.

Substrate is bound by residues asparagine 15, glutamine 47, and asparagine 67. Residue cysteine 76 is the Proton donor of the active site. Substrate is bound by residues 77–78 (GN), asparagine 163, asparagine 197, and 215–216 (ER). Cysteine 224 (proton acceptor) is an active-site residue. 225–226 (GS) serves as a coordination point for substrate. The interval 279-303 (DPATGEWSRDTQGLQGSGNADRGTA) is disordered.

It belongs to the diaminopimelate epimerase family. As to quaternary structure, homodimer.

The protein resides in the cytoplasm. It carries out the reaction (2S,6S)-2,6-diaminopimelate = meso-2,6-diaminopimelate. The protein operates within amino-acid biosynthesis; L-lysine biosynthesis via DAP pathway; DL-2,6-diaminopimelate from LL-2,6-diaminopimelate: step 1/1. Catalyzes the stereoinversion of LL-2,6-diaminopimelate (L,L-DAP) to meso-diaminopimelate (meso-DAP), a precursor of L-lysine and an essential component of the bacterial peptidoglycan. This is Diaminopimelate epimerase from Brucella canis (strain ATCC 23365 / NCTC 10854 / RM-666).